We begin with the raw amino-acid sequence, 378 residues long: Ribosomal RNA large subunit methyltransferase G (378 aa).

This sequence belongs to the methyltransferase superfamily. RlmG family.

It is found in the cytoplasm. It carries out the reaction guanosine(1835) in 23S rRNA + S-adenosyl-L-methionine = N(2)-methylguanosine(1835) in 23S rRNA + S-adenosyl-L-homocysteine + H(+). In terms of biological role, specifically methylates the guanine in position 1835 (m2G1835) of 23S rRNA. In Escherichia coli O157:H7, this protein is Ribosomal RNA large subunit methyltransferase G.